We begin with the raw amino-acid sequence, 587 residues long: Aspartate--tRNA ligase (587 aa).

Residue Glu-174 coordinates L-aspartate. The tract at residues Gln-198–Lys-201 is aspartate. Arg-220 is an L-aspartate binding site. Residues Arg-220–Glu-222 and Gln-229 each bind ATP. An L-aspartate-binding site is contributed by His-443. Residue Glu-477 participates in ATP binding. Arg-484 contacts L-aspartate. Position 529–532 (Gly-529–Arg-532) interacts with ATP.

Belongs to the class-II aminoacyl-tRNA synthetase family. Type 1 subfamily. Homodimer.

It localises to the cytoplasm. The catalysed reaction is tRNA(Asp) + L-aspartate + ATP = L-aspartyl-tRNA(Asp) + AMP + diphosphate. Its function is as follows. Catalyzes the attachment of L-aspartate to tRNA(Asp) in a two-step reaction: L-aspartate is first activated by ATP to form Asp-AMP and then transferred to the acceptor end of tRNA(Asp). The protein is Aspartate--tRNA ligase of Streptococcus pneumoniae (strain ATCC 700669 / Spain 23F-1).